The following is an 88-amino-acid chain: Small ribosomal subunit protein uS17 (88 aa).

Belongs to the universal ribosomal protein uS17 family. In terms of assembly, part of the 30S ribosomal subunit.

One of the primary rRNA binding proteins, it binds specifically to the 5'-end of 16S ribosomal RNA. This Lawsonia intracellularis (strain PHE/MN1-00) protein is Small ribosomal subunit protein uS17.